Consider the following 229-residue polypeptide: Large ribosomal subunit protein uL1 (229 aa).

This sequence belongs to the universal ribosomal protein uL1 family. Part of the 50S ribosomal subunit.

Binds directly to 23S rRNA. The L1 stalk is quite mobile in the ribosome, and is involved in E site tRNA release. Functionally, protein L1 is also a translational repressor protein, it controls the translation of the L11 operon by binding to its mRNA. The protein is Large ribosomal subunit protein uL1 of Mycoplasmopsis pulmonis (strain UAB CTIP) (Mycoplasma pulmonis).